The sequence spans 483 residues: 5-hydroxytryptamine receptor 3A (483 aa).

A signal peptide spans 1-23 (MPLCIPQVLLALFLSVLIAQGEG). Topologically, residues 24-246 (SRRRATQAHS…MKFYVVIRRR (223 aa)) are extracellular. 3 N-linked (GlcNAc...) asparagine glycosylation sites follow: asparagine 109, asparagine 175, and asparagine 191. The cysteines at positions 162 and 176 are disulfide-linked. The helical transmembrane segment at 247 to 273 (PLFYAVSLLLPSIFLMVVDIVGFCLPP) threads the bilayer. The Cytoplasmic portion of the chain corresponds to 274-278 (DSGER). Residues 279–297 (VSFKITLLLGYSVFLIIVS) form a helical membrane-spanning segment. The Extracellular portion of the chain corresponds to 298–307 (DTLPATAIGT). Residues 308–326 (PLIGVYFVVCMALLVISLA) form a helical membrane-spanning segment. Residues 327–460 (ETIFIVQLVH…GYVLDRLLFR (134 aa)) are Cytoplasmic-facing. Positions 393–414 (VGSPQDLEKTSRSRDSPLPPPR) are disordered. A compositionally biased stretch (basic and acidic residues) spans 398 to 407 (DLEKTSRSRD). Residues 419–455 (AVRGLLQELSSIRHSLEKRDEMREVARDWLRVGYVLD) form an HA-stretch; determines single-channel conductance in 5-HT3 receptors region. A helical membrane pass occupies residues 461–480 (IYLLAVLAYSITLVTLWSIW). Residues 481-483 (HYS) are Extracellular-facing.

It belongs to the ligand-gated ion channel (TC 1.A.9) family. 5-hydroxytryptamine receptor (TC 1.A.9.2) subfamily. HTR3A sub-subfamily. In terms of assembly, forms homopentameric as well as heteropentameric serotonin-activated cation-selective channel complexes with HTR3B or HTR3C or HTR3D or HTR3E. The homomeric complex is functional but exhibits low conductance with modified voltage dependence, and decreased agonist and antagonist affinity. Heteropentameric complexes display properties which resemble that of neuronal serotonin-activated channels in vivo. Interacts with RIC3. In terms of tissue distribution, expressed in central and peripheral neurons.

Its subcellular location is the postsynaptic cell membrane. It is found in the cell membrane. The enzyme catalyses Na(+)(in) = Na(+)(out). It carries out the reaction K(+)(in) = K(+)(out). The catalysed reaction is Ca(2+)(in) = Ca(2+)(out). It catalyses the reaction Mg(2+)(in) = Mg(2+)(out). Functionally, forms serotonin (5-hydroxytryptamine/5-HT3)-activated cation-selective channel complexes, which when activated cause fast, depolarizing responses in neurons. This is 5-hydroxytryptamine receptor 3A from Rattus norvegicus (Rat).